A 185-amino-acid polypeptide reads, in one-letter code: Ribosome-recycling factor (185 aa).

Belongs to the RRF family.

It is found in the cytoplasm. Its function is as follows. Responsible for the release of ribosomes from messenger RNA at the termination of protein biosynthesis. May increase the efficiency of translation by recycling ribosomes from one round of translation to another. This Shewanella denitrificans (strain OS217 / ATCC BAA-1090 / DSM 15013) protein is Ribosome-recycling factor.